The primary structure comprises 257 residues: 1-(5-phosphoribosyl)-5-[(5-phosphoribosylamino)methylideneamino] imidazole-4-carboxamide isomerase (257 aa).

The active-site Proton acceptor is aspartate 8. Aspartate 129 acts as the Proton donor in catalysis.

Belongs to the HisA/HisF family.

The protein resides in the cytoplasm. The catalysed reaction is 1-(5-phospho-beta-D-ribosyl)-5-[(5-phospho-beta-D-ribosylamino)methylideneamino]imidazole-4-carboxamide = 5-[(5-phospho-1-deoxy-D-ribulos-1-ylimino)methylamino]-1-(5-phospho-beta-D-ribosyl)imidazole-4-carboxamide. Its pathway is amino-acid biosynthesis; L-histidine biosynthesis; L-histidine from 5-phospho-alpha-D-ribose 1-diphosphate: step 4/9. In Thermosynechococcus vestitus (strain NIES-2133 / IAM M-273 / BP-1), this protein is 1-(5-phosphoribosyl)-5-[(5-phosphoribosylamino)methylideneamino] imidazole-4-carboxamide isomerase.